We begin with the raw amino-acid sequence, 224 residues long: Cysteine S-methyltransferase NleE (224 aa).

The interaction with host proteins TAB2, TAB3 and ZRANB3 stretch occupies residues 49–52 (GITR). S-adenosyl-L-methionine-binding residues include alanine 92, serine 98, arginine 107, glutamine 111, tyrosine 204, and glutamate 208.

This sequence belongs to the NleE/OspZ family. In terms of assembly, monomer.

The protein localises to the secreted. It is found in the host nucleus. It catalyses the reaction L-cysteinyl-[protein] + S-adenosyl-L-methionine = S-methyl-L-cysteinyl-[protein] + S-adenosyl-L-homocysteine + H(+). Cysteine methyltransferase effector that inhibits host cell NF-kappa-B activation by preventing nuclear translocation of host protein RELA/p65. Acts by mediating cysteine methylation of host proteins TAB2 and TAB3: methylation of a conserved cysteine residue of the RanBP2-type zinc finger (NZF) of TAB2 and TAB3 disrupts zinc-binding, thereby inactivating the ubiquitin chain-binding activity of TAB2 and TAB3, leading to NF-kappa-B inactivation. Also mediates cysteine methylation of host protein ZRANB3, inactivating its ability to bind ubiquitin chains. In Escherichia coli O157:H7, this protein is Cysteine S-methyltransferase NleE.